The chain runs to 71 residues: SPbeta prophage-derived uncharacterized protein YorP (71 aa).

The polypeptide is SPbeta prophage-derived uncharacterized protein YorP (yorP) (Bacillus subtilis (strain 168)).